We begin with the raw amino-acid sequence, 212 residues long: Histidine biosynthesis bifunctional protein HisIE (212 aa).

The tract at residues 1–109 (MRPDFHKQEL…ELIPFDDSDI (109 aa)) is phosphoribosyl-AMP cyclohydrolase. The interval 110–212 (FSELEKQIID…KKEFHTRTAD (103 aa)) is phosphoribosyl-ATP pyrophosphohydrolase.

The protein in the N-terminal section; belongs to the PRA-CH family. This sequence in the C-terminal section; belongs to the PRA-PH family.

The protein localises to the cytoplasm. It catalyses the reaction 1-(5-phospho-beta-D-ribosyl)-ATP + H2O = 1-(5-phospho-beta-D-ribosyl)-5'-AMP + diphosphate + H(+). The enzyme catalyses 1-(5-phospho-beta-D-ribosyl)-5'-AMP + H2O = 1-(5-phospho-beta-D-ribosyl)-5-[(5-phospho-beta-D-ribosylamino)methylideneamino]imidazole-4-carboxamide. The protein operates within amino-acid biosynthesis; L-histidine biosynthesis; L-histidine from 5-phospho-alpha-D-ribose 1-diphosphate: step 2/9. Its pathway is amino-acid biosynthesis; L-histidine biosynthesis; L-histidine from 5-phospho-alpha-D-ribose 1-diphosphate: step 3/9. The polypeptide is Histidine biosynthesis bifunctional protein HisIE (hisI) (Lactococcus lactis subsp. lactis (strain IL1403) (Streptococcus lactis)).